The primary structure comprises 340 residues: Uroporphyrinogen decarboxylase (340 aa).

Residues 21–25 (RQAGR), Asp-71, Tyr-148, Ser-203, and His-316 each bind substrate.

It belongs to the uroporphyrinogen decarboxylase family. As to quaternary structure, homodimer.

The protein resides in the cytoplasm. It carries out the reaction uroporphyrinogen III + 4 H(+) = coproporphyrinogen III + 4 CO2. It participates in porphyrin-containing compound metabolism; protoporphyrin-IX biosynthesis; coproporphyrinogen-III from 5-aminolevulinate: step 4/4. Functionally, catalyzes the decarboxylation of four acetate groups of uroporphyrinogen-III to yield coproporphyrinogen-III. This Campylobacter hominis (strain ATCC BAA-381 / DSM 21671 / CCUG 45161 / LMG 19568 / NCTC 13146 / CH001A) protein is Uroporphyrinogen decarboxylase.